The sequence spans 496 residues: Cytochrome P450 71AV8 (496 aa).

Residues 3-23 (ISIPTTLGLAVIIFIIFKLLT) traverse the membrane as a helical segment. Heme is bound at residue Cys432.

Belongs to the cytochrome P450 family. Requires heme as cofactor.

It localises to the membrane. Its function is as follows. Valencene oxidase, which preferentially hydroylates the C2 position of (+)-valencene in the trans-orientation, producing trans-nootkatol that can be further oxidized to (+)-nootkatone. Can also catalyze the three-step conversion of germacrene A to germacra-1(10),4,11(13)-trien-12-oic acid and the partial conversion of the non-natural substrate amorpha-4,11-diene into artemisinic alcohol and artemisinic aldehyde. This Cichorium intybus (Chicory) protein is Cytochrome P450 71AV8 (CYP71AV8).